A 393-amino-acid chain; its full sequence is Small ribosomal subunit protein bS1 (393 aa).

S1 motif domains are found at residues 16 to 90 (GDKV…LSKR), 108 to 173 (NQTI…LSRK), 194 to 262 (GDVI…LSIK), and 279 to 348 (GDVI…LSIK). Residues 356–369 (VIESDSETTQSYLD) are compositionally biased toward polar residues. The disordered stretch occupies residues 356–381 (VIESDSETTQSYLDNGSDDEDNPTLG).

The protein belongs to the bacterial ribosomal protein bS1 family.

Binds mRNA; thus facilitating recognition of the initiation point. It is needed to translate mRNA with a short Shine-Dalgarno (SD) purine-rich sequence. The protein is Small ribosomal subunit protein bS1 (rpsA) of Staphylococcus saprophyticus subsp. saprophyticus (strain ATCC 15305 / DSM 20229 / NCIMB 8711 / NCTC 7292 / S-41).